The primary structure comprises 112 residues: Integration host factor subunit alpha (112 aa).

This sequence belongs to the bacterial histone-like protein family. Heterodimer of an alpha and a beta chain.

Functionally, this protein is one of the two subunits of integration host factor, a specific DNA-binding protein that functions in genetic recombination as well as in transcriptional and translational control. The sequence is that of Integration host factor subunit alpha from Allorhizobium ampelinum (strain ATCC BAA-846 / DSM 112012 / S4) (Agrobacterium vitis (strain S4)).